Here is a 514-residue protein sequence, read N- to C-terminus: GMP synthase [glutamine-hydrolyzing] (514 aa).

In terms of domain architecture, Glutamine amidotransferase type-1 spans 9-199; sequence KIIVLDFGSQ…ALNVCGCKGD (191 aa). The active-site Nucleophile is Cys-86. Active-site residues include His-173 and Glu-175. The region spanning 200-389 is the GMPS ATP-PPase domain; the sequence is WTMENFSEVE…LGMPDAIVWR (190 aa). 227–233 lines the ATP pocket; that stretch reads SGGVDSS.

As to quaternary structure, homodimer.

It carries out the reaction XMP + L-glutamine + ATP + H2O = GMP + L-glutamate + AMP + diphosphate + 2 H(+). Its pathway is purine metabolism; GMP biosynthesis; GMP from XMP (L-Gln route): step 1/1. Its function is as follows. Catalyzes the synthesis of GMP from XMP. This is GMP synthase [glutamine-hydrolyzing] from Listeria monocytogenes serotype 4b (strain F2365).